Here is a 108-residue protein sequence, read N- to C-terminus: MGVEIETISPGDGRTFPKKGQTCVVHYTGMLQNGKKFDSSRDRNKPFKFRIGKQEVIKGFEEGAAQMSLGQRAKLTCTPDVAYGATGHPGVIPPNATLIFDVELLNLE.

The 89-residue stretch at Gly-20–Glu-108 folds into the PPIase FKBP-type domain.

In terms of assembly, identified in a complex composed of RYR2, FKBP1B, PKA catalytic subunit, PRKAR2A, AKAP6, and the protein phosphatases PP2A and PP1. Interacts directly with RYR2.

The protein localises to the cytoplasm. Its subcellular location is the sarcoplasmic reticulum. It catalyses the reaction [protein]-peptidylproline (omega=180) = [protein]-peptidylproline (omega=0). Its activity is regulated as follows. Inhibited by both FK506 and rapamycin. Its function is as follows. Has the potential to contribute to the immunosuppressive and toxic effects of FK506 and rapamycin. PPIases accelerate the folding of proteins. It catalyzes the cis-trans isomerization of proline imidic peptide bonds in oligopeptides. The polypeptide is Peptidyl-prolyl cis-trans isomerase FKBP1B (FKBP1B) (Bos taurus (Bovine)).